A 425-amino-acid polypeptide reads, in one-letter code: Dihydroorotase (425 aa).

Zn(2+) is bound by residues histidine 61 and histidine 63. Substrate-binding positions include 63–65 (HLR) and asparagine 95. Aspartate 153, histidine 180, and histidine 233 together coordinate Zn(2+). Asparagine 279 contributes to the substrate binding site. Aspartate 306 is a binding site for Zn(2+). Aspartate 306 is an active-site residue. Substrate is bound at residue histidine 310.

The protein belongs to the metallo-dependent hydrolases superfamily. DHOase family. Class I DHOase subfamily. Zn(2+) is required as a cofactor.

It catalyses the reaction (S)-dihydroorotate + H2O = N-carbamoyl-L-aspartate + H(+). The protein operates within pyrimidine metabolism; UMP biosynthesis via de novo pathway; (S)-dihydroorotate from bicarbonate: step 3/3. Functionally, catalyzes the reversible cyclization of carbamoyl aspartate to dihydroorotate. This Geotalea daltonii (strain DSM 22248 / JCM 15807 / FRC-32) (Geobacter daltonii) protein is Dihydroorotase.